The primary structure comprises 290 residues: uncharacterized protein (290 aa).

This sequence belongs to the UreD family.

Its subcellular location is the cytoplasm. The protein localises to the nucleus. Probably facilitates nickel incorporation. This is an uncharacterized protein from Schizosaccharomyces pombe (strain 972 / ATCC 24843) (Fission yeast).